A 319-amino-acid chain; its full sequence is Ribonuclease Z (319 aa).

H62, H64, D66, H67, H145, D215, and H273 together coordinate Zn(2+). The Proton acceptor role is filled by D66.

This sequence belongs to the RNase Z family. As to quaternary structure, homodimer. It depends on Zn(2+) as a cofactor.

It carries out the reaction Endonucleolytic cleavage of RNA, removing extra 3' nucleotides from tRNA precursor, generating 3' termini of tRNAs. A 3'-hydroxy group is left at the tRNA terminus and a 5'-phosphoryl group is left at the trailer molecule.. In terms of biological role, zinc phosphodiesterase, which displays some tRNA 3'-processing endonuclease activity. Probably involved in tRNA maturation, by removing a 3'-trailer from precursor tRNA. The polypeptide is Ribonuclease Z (Borrelia garinii subsp. bavariensis (strain ATCC BAA-2496 / DSM 23469 / PBi) (Borreliella bavariensis)).